The sequence spans 270 residues: Phosphatidylglycerol--prolipoprotein diacylglyceryl transferase (270 aa).

7 helical membrane-spanning segments follow: residues 10 to 30 (VAVA…LVGI), 56 to 76 (LIFW…VLFY), 92 to 112 (WKGG…AWWF), 120 to 140 (FFQL…AGRI), 175 to 195 (SQLY…NLYA), 202 to 222 (MAVS…VEFV), and 237 to 257 (VTMG…LIWL). Arginine 139 provides a ligand contact to a 1,2-diacyl-sn-glycero-3-phospho-(1'-sn-glycerol).

The protein belongs to the Lgt family.

It is found in the cell inner membrane. It carries out the reaction L-cysteinyl-[prolipoprotein] + a 1,2-diacyl-sn-glycero-3-phospho-(1'-sn-glycerol) = an S-1,2-diacyl-sn-glyceryl-L-cysteinyl-[prolipoprotein] + sn-glycerol 1-phosphate + H(+). It functions in the pathway protein modification; lipoprotein biosynthesis (diacylglyceryl transfer). Its function is as follows. Catalyzes the transfer of the diacylglyceryl group from phosphatidylglycerol to the sulfhydryl group of the N-terminal cysteine of a prolipoprotein, the first step in the formation of mature lipoproteins. This Pseudomonas savastanoi pv. phaseolicola (strain 1448A / Race 6) (Pseudomonas syringae pv. phaseolicola (strain 1448A / Race 6)) protein is Phosphatidylglycerol--prolipoprotein diacylglyceryl transferase.